The sequence spans 222 residues: Cytochrome b6 (222 aa).

The helical transmembrane segment at 39 to 59 (IFYCLGGITLVCFLVQFATGF) threads the bilayer. Cys-42 serves as a coordination point for heme c. His-93 and His-107 together coordinate heme b. 3 consecutive transmembrane segments (helical) span residues 97 to 117 (ASMMVLMMILHVFRVYLTGGF), 123 to 143 (LTWMTGVILAVITVSFGVTGY), and 193 to 213 (LHTFVFPWLIAVFMLAHFLMI). 2 residues coordinate heme b: His-194 and His-209.

This sequence belongs to the cytochrome b family. PetB subfamily. The 4 large subunits of the cytochrome b6-f complex are cytochrome b6, subunit IV (17 kDa polypeptide, PetD), cytochrome f and the Rieske protein, while the 4 small subunits are PetG, PetL, PetM and PetN. The complex functions as a dimer. Heme b is required as a cofactor. Heme c serves as cofactor.

It localises to the cellular thylakoid membrane. Its function is as follows. Component of the cytochrome b6-f complex, which mediates electron transfer between photosystem II (PSII) and photosystem I (PSI), cyclic electron flow around PSI, and state transitions. The protein is Cytochrome b6 of Crocosphaera subtropica (strain ATCC 51142 / BH68) (Cyanothece sp. (strain ATCC 51142)).